Consider the following 387-residue polypeptide: MDLFEYQAKELFAKHNVPTSPGRVTDSAEDAKTIAEEIGRPVMVKAQVKTGGRGKAGGVKYAATPDDAFTHANNILGLDIKGHVVKKLLVAEASDIAEEYYISFLLDRANRTYLAMCSVEGGMEIEEVAATKPERLAKVPVDAVKGVDLAFARSIAEQGHLPAEVLDAAAVTIQKLWEVFVKEDATLVEVNPLVRTPDDQILALDGKVTLDENAGFRQPGHAEFEDRDATDPLELKAKENDLNYVKLDGQVGIIGNGAGLVMSTLDVVAYAGENHGGVKPANFLDIGGGASAAVMAAGLDVILGDSQVKSVFVNVFGGITACDAVANGIVQALQILGDEANKPLVVRLDGNNVEEGRRILAEANHPLVIQAETMDAGADKAAELANK.

The 228-residue stretch at 9 to 236 (KELFAKHNVP…RDATDPLELK (228 aa)) folds into the ATP-grasp domain. ATP-binding positions include lysine 45, 52–54 (GRG), serine 94, and glutamate 99. Mg(2+) contacts are provided by asparagine 191 and aspartate 205. Residues asparagine 256 and 318–320 (GIT) contribute to the substrate site.

Belongs to the succinate/malate CoA ligase beta subunit family. As to quaternary structure, heterotetramer of two alpha and two beta subunits. Mg(2+) serves as cofactor.

It catalyses the reaction succinate + ATP + CoA = succinyl-CoA + ADP + phosphate. The enzyme catalyses GTP + succinate + CoA = succinyl-CoA + GDP + phosphate. The protein operates within carbohydrate metabolism; tricarboxylic acid cycle; succinate from succinyl-CoA (ligase route): step 1/1. Succinyl-CoA synthetase functions in the citric acid cycle (TCA), coupling the hydrolysis of succinyl-CoA to the synthesis of either ATP or GTP and thus represents the only step of substrate-level phosphorylation in the TCA. The beta subunit provides nucleotide specificity of the enzyme and binds the substrate succinate, while the binding sites for coenzyme A and phosphate are found in the alpha subunit. The polypeptide is Succinate--CoA ligase [ADP-forming] subunit beta (Mycolicibacterium smegmatis (strain ATCC 700084 / mc(2)155) (Mycobacterium smegmatis)).